Here is a 173-residue protein sequence, read N- to C-terminus: Ribosome maturation factor RimM (173 aa).

In terms of domain architecture, PRC barrel spans 95-169; that stretch reads EGSYYFKDIL…RIEVTLLEGL (75 aa).

This sequence belongs to the RimM family. In terms of assembly, binds ribosomal protein uS19.

It localises to the cytoplasm. In terms of biological role, an accessory protein needed during the final step in the assembly of 30S ribosomal subunit, possibly for assembly of the head region. Essential for efficient processing of 16S rRNA. May be needed both before and after RbfA during the maturation of 16S rRNA. It has affinity for free ribosomal 30S subunits but not for 70S ribosomes. The chain is Ribosome maturation factor RimM from Lactobacillus johnsonii (strain CNCM I-12250 / La1 / NCC 533).